The chain runs to 444 residues: ATP-dependent protease ATPase subunit HslU (444 aa).

ATP-binding positions include Ile18, 60–65 (GVGKTE), Asp256, Glu322, and Arg394.

The protein belongs to the ClpX chaperone family. HslU subfamily. In terms of assembly, a double ring-shaped homohexamer of HslV is capped on each side by a ring-shaped HslU homohexamer. The assembly of the HslU/HslV complex is dependent on binding of ATP.

It localises to the cytoplasm. ATPase subunit of a proteasome-like degradation complex; this subunit has chaperone activity. The binding of ATP and its subsequent hydrolysis by HslU are essential for unfolding of protein substrates subsequently hydrolyzed by HslV. HslU recognizes the N-terminal part of its protein substrates and unfolds these before they are guided to HslV for hydrolysis. The protein is ATP-dependent protease ATPase subunit HslU of Serratia proteamaculans (strain 568).